The chain runs to 318 residues: Aspartate carbamoyltransferase catalytic subunit (318 aa).

Positions 64 and 65 each coordinate carbamoyl phosphate. Position 92 (Lys-92) interacts with L-aspartate. 3 residues coordinate carbamoyl phosphate: Arg-114, His-142, and Gln-145. L-aspartate contacts are provided by Arg-176 and Arg-230. Carbamoyl phosphate is bound by residues Gly-271 and Pro-272.

It belongs to the aspartate/ornithine carbamoyltransferase superfamily. ATCase family. As to quaternary structure, heterododecamer (2C3:3R2) of six catalytic PyrB chains organized as two trimers (C3), and six regulatory PyrI chains organized as three dimers (R2).

It catalyses the reaction carbamoyl phosphate + L-aspartate = N-carbamoyl-L-aspartate + phosphate + H(+). Its pathway is pyrimidine metabolism; UMP biosynthesis via de novo pathway; (S)-dihydroorotate from bicarbonate: step 2/3. Catalyzes the condensation of carbamoyl phosphate and aspartate to form carbamoyl aspartate and inorganic phosphate, the committed step in the de novo pyrimidine nucleotide biosynthesis pathway. This Desulfovibrio desulfuricans (strain ATCC 27774 / DSM 6949 / MB) protein is Aspartate carbamoyltransferase catalytic subunit.